Consider the following 239-residue polypeptide: Aldehyde dehydrogenase, dimeric NADP-preferring (239 aa).

Cys30 is an active-site residue.

It belongs to the aldehyde dehydrogenase family. In terms of assembly, homodimer.

The protein resides in the cytoplasm. The enzyme catalyses an aldehyde + NAD(+) + H2O = a carboxylate + NADH + 2 H(+). It catalyses the reaction octanal + NAD(+) + H2O = octanoate + NADH + 2 H(+). Functionally, ALDHs play a major role in the detoxification of alcohol-derived acetaldehyde. They are involved in the metabolism of corticosteroids, biogenic amines, neurotransmitters, and lipid peroxidation. Oxidizes medium and long chain aldehydes into non-toxic fatty acids. Preferentially oxidizes aromatic aldehyde substrates. Comprises about 50 percent of corneal epithelial soluble proteins. May play a role in preventing corneal damage caused by ultraviolet light. This chain is Aldehyde dehydrogenase, dimeric NADP-preferring (ALDH3A1), found in Bos taurus (Bovine).